The primary structure comprises 381 residues: Cell division protein FtsZ (381 aa).

Residues 1 to 25 are disordered; that stretch reads MKFINDAIKESEKREKPSSSSMNSE. A compositionally biased stretch (basic and acidic residues) spans 7-17; sequence AIKESEKREKP. GTP is bound by residues 48–52, 135–137, E166, R170, and D213; these read GAGNN and GTG.

Belongs to the FtsZ family. Homodimer. Polymerizes to form a dynamic ring structure in a strictly GTP-dependent manner. Interacts directly with several other division proteins.

It localises to the cytoplasm. Functionally, essential cell division protein that forms a contractile ring structure (Z ring) at the future cell division site. The regulation of the ring assembly controls the timing and the location of cell division. One of the functions of the FtsZ ring is to recruit other cell division proteins to the septum to produce a new cell wall between the dividing cells. Binds GTP and shows GTPase activity. The sequence is that of Cell division protein FtsZ from Methanothermobacter thermautotrophicus (strain ATCC 29096 / DSM 1053 / JCM 10044 / NBRC 100330 / Delta H) (Methanobacterium thermoautotrophicum).